A 267-amino-acid chain; its full sequence is Undecaprenyl-diphosphatase (267 aa).

The next 7 helical transmembrane spans lie at 1 to 21, 49 to 69, 83 to 103, 111 to 131, 190 to 210, 219 to 239, and 245 to 265; these read MTLF…FLPV, VGTL…AVAG, AFLA…GLAL, ALRS…VLYW, MLMS…EVAA, DAAI…TLMM, and VSFT…LIIA.

It belongs to the UppP family.

The protein localises to the cell inner membrane. It carries out the reaction di-trans,octa-cis-undecaprenyl diphosphate + H2O = di-trans,octa-cis-undecaprenyl phosphate + phosphate + H(+). Catalyzes the dephosphorylation of undecaprenyl diphosphate (UPP). Confers resistance to bacitracin. This chain is Undecaprenyl-diphosphatase, found in Dinoroseobacter shibae (strain DSM 16493 / NCIMB 14021 / DFL 12).